The chain runs to 361 residues: 3-dehydroquinate synthase (361 aa).

The protein belongs to the archaeal-type DHQ synthase family.

The enzyme catalyses 2-amino-2,3,7-trideoxy-D-lyxo-hept-6-ulosonate + NAD(+) + H2O = 3-dehydroquinate + NH4(+) + NADH + H(+). Its function is as follows. Catalyzes the oxidative deamination and cyclization of 2-amino-3,7-dideoxy-D-threo-hept-6-ulosonic acid (ADH) to yield 3-dehydroquinate (DHQ), which is fed into the canonical shikimic pathway of aromatic amino acid biosynthesis. This is 3-dehydroquinate synthase from Methanococcus maripaludis (strain C6 / ATCC BAA-1332).